The sequence spans 675 residues: Protein brown (675 aa).

The Cytoplasmic portion of the chain corresponds to 1–419 (MQESGGSSGQ…TEDLRNIRSG (419 aa)). Residues 34–261 (YSFWNECRKK…EVVAESHESL (228 aa)) enclose the ABC transporter domain. 66–73 (GGSGAGKT) provides a ligand contact to ATP. The segment at 229-249 (EDSFETPSGESSASGSGSKSI) is disordered. The segment covering 236-248 (SGESSASGSGSKS) has biased composition (low complexity). A helical transmembrane segment spans residues 420 to 440 (LIAFGFFMITAVTLSLMYSGI). Residues 441-460 (GGLTQRTVQDVGGSIFMLSN) lie on the Extracellular side of the membrane. A helical transmembrane segment spans residues 461–481 (EMIFTFSYGVTYIFPAALPII). At 482-497 (RREVGEGTYSLSAYYV) the chain is on the cytoplasmic side. A helical transmembrane segment spans residues 498–518 (ALVLSFVPVAFFKGYVFLSVI). At 519–531 (YASIYYTRGFLLY) the chain is on the extracellular side. Residues 532 to 552 (LSMGFLMSLSAVAAVGYGVFL) form a helical membrane-spanning segment. Residues 553–568 (SSLFESDKMASECAAP) lie on the Cytoplasmic side of the membrane. A helical transmembrane segment spans residues 569–589 (FDLIFLIFGGTYMNVDTVPGL). Residues 590 to 644 (KYLSLFFYSNEALMYKFWIDIDNIDCPVNEDHPCIKTGVEVLQQGSYRNADYTYW) lie on the Extracellular side of the membrane. The chain crosses the membrane as a helical span at residues 645 to 665 (LDCFSLVVVAVIFHIVSFGLV). Topologically, residues 666–675 (RRYIHRSGYY) are cytoplasmic.

Belongs to the ABC transporter superfamily. ABCG family. Eye pigment precursor importer (TC 3.A.1.204) subfamily. As to quaternary structure, may form a heterodimer with w/white.

The protein resides in the membrane. It carries out the reaction guanine(out) + ATP + H2O = guanine(in) + ADP + phosphate + H(+). The catalysed reaction is riboflavin(in) + ATP + H2O = riboflavin(out) + ADP + phosphate + H(+). It catalyses the reaction (6S)-5,6,7,8-tetrahydrofolate(out) + ATP + H2O = (6S)-5,6,7,8-tetrahydrofolate(in) + ADP + phosphate + H(+). In terms of biological role, ATP-dependent transporter of the ATP-binding cassette (ABC) family which transports various molecules including bioamines, neurotransmitters and metabolic intermediates. In the eye and probably in association with w/white, required for the transport of the eye red pigment precursor, guanine, into pigment cell granules. In Malpighian tubules, involved in guanine uptake. Probably in association with w/white, involved in aging-induced intestinal stem cell proliferation in the midgut by regulating tetrahydrofolate transport. This Drosophila melanogaster (Fruit fly) protein is Protein brown.